The following is a 173-amino-acid chain: Photosystem I assembly protein Ycf3 (173 aa).

TPR repeat units lie at residues 35–68, 72–105, and 120–153; these read AYLY…EDNQ, GETL…NPKQ, and GRMA…YPGG.

Belongs to the Ycf3 family.

It is found in the cellular thylakoid membrane. Its function is as follows. Essential for the assembly of the photosystem I (PSI) complex. May act as a chaperone-like factor to guide the assembly of the PSI subunits. The sequence is that of Photosystem I assembly protein Ycf3 from Prochlorococcus marinus (strain NATL2A).